The primary structure comprises 994 residues: Glutamate [NMDA] receptor subunit 1 (994 aa).

The signal sequence occupies residues 1 to 23 (MAADGFVYRWLLFGTTIVLLAEA). At 24–570 (AQRHTASDNP…TLVSFLQPFS (547 aa)) the chain is on the extracellular side. Residues Asn-255, Asn-311, Asn-342, Asn-394, Asn-451, Asn-478, and Asn-498 are each glycosylated (N-linked (GlcNAc...) asparagine). Residues 527-529 (PLT) and Arg-534 each bind glycine. The helical transmembrane segment at 571 to 591 (NTLWILVMVSVHVVALVLYLL) threads the bilayer. Residues 592–648 (DRFSPFGRFKLSHSDSNEEKALNLSSAVWFAWGVLLNSGIGEGTPRSFSARVLGMVW) lie on the Cytoplasmic side of the membrane. A helical membrane pass occupies residues 649-669 (AGFAMIIVASYTANLAAFLVL). Topologically, residues 670–828 (ERPKTKLSGI…KTPNTLGLKN (159 aa)) are extracellular. Asn-690 carries an N-linked (GlcNAc...) asparagine glycan. Glycine-binding residues include Ser-700 and Asp-744. A helical membrane pass occupies residues 829-849 (MAGVFILVGVGIAGGVGLIII). At 850 to 994 (EVIYKKHQVK…YTSDVSHLVV (145 aa)) the chain is on the cytoplasmic side. Residues 971 to 994 (RPQQNMLPPRYSPGYTSDVSHLVV) form a disordered region. The span at 984–994 (GYTSDVSHLVV) shows a compositional bias: polar residues.

Belongs to the glutamate-gated ion channel (TC 1.A.10.1) family. Forms a heteromeric NMDA channel with Nmdar2.

It is found in the cell membrane. It localises to the postsynaptic cell membrane. The protein localises to the postsynaptic density. NMDA receptor subtype of glutamate-gated ion channels with high calcium permeability and voltage-dependent sensitivity to magnesium. Mediated by glycine. This protein plays a key role in synaptic plasticity, synaptogenesis, excitotoxicity, memory acquisition and learning. It mediates neuronal functions in glutamate neurotransmission. Is involved in the cell surface targeting of NMDA receptors. Plays a role in associative learning and in long-term memory consolidation. In Drosophila ananassae (Fruit fly), this protein is Glutamate [NMDA] receptor subunit 1.